Here is a 928-residue protein sequence, read N- to C-terminus: Zinc metalloproteinase nas-39 (928 aa).

Positions 1-30 (MRFSANIAIIVNIIFLFIVVEFVLPTFIRS) are cleaved as a signal peptide. The Peptidase M12A domain maps to 48–247 (AATAKKERIW…RQTKKLYKCA (200 aa)). 2 N-linked (GlcNAc...) asparagine glycosylation sites follow: Asn-69 and Asn-87. 4 cysteine pairs are disulfide-bonded: Cys-90/Cys-246, Cys-111/Cys-133, Cys-113/Cys-114, and Cys-249/Cys-268. His-141 lines the Zn(2+) pocket. Residue Glu-142 is part of the active site. The Zn(2+) site is built by His-145 and His-151. CUB domains lie at 249-359 (CGGT…YAIC) and 360-476 (GGPI…FTKE). Residue Asn-283 is glycosylated (N-linked (GlcNAc...) asparagine). 6 disulfides stabilise this stretch: Cys-359-Cys-385, Cys-412-Cys-439, Cys-480-Cys-491, Cys-487-Cys-500, Cys-502-Cys-515, and Cys-519-Cys-545. In terms of domain architecture, EGF-like 1; calcium-binding spans 477-516 (LNECATDKNICHHYCVNTVGGFKCACRVGYSLSSNGFSCD). The region spanning 519 to 625 (CGGYLKASNG…DGFFANFIAD (107 aa)) is the CUB 3 domain. 2 N-linked (GlcNAc...) asparagine glycosylation sites follow: Asn-527 and Asn-560. Disulfide bonds link Cys-573–Cys-587, Cys-629–Cys-640, Cys-636–Cys-649, Cys-651–Cys-664, Cys-669–Cys-695, Cys-722–Cys-744, Cys-782–Cys-812, and Cys-840–Cys-863. The EGF-like 2; calcium-binding domain maps to 626–665 (FDECQNDNAGCEHTCQNRLGSYVCTCNPGYILAEDKHNCK). CUB domains follow at residues 669-781 (CFFE…YTSL) and 782-900 (CGGR…YREA). Asn-694 is a glycosylation site (N-linked (GlcNAc...) asparagine). The interval 895-928 (AEYREAPRSSSTKRTFVSKTRHSPLEEPIHDRNE) is disordered. Polar residues predominate over residues 902–912 (RSSSTKRTFVS). Basic and acidic residues predominate over residues 917-928 (SPLEEPIHDRNE).

It depends on Zn(2+) as a cofactor. Expressed in pharyngeal, vulva and body wall muscles, intestine and several neurons.

The protein localises to the secreted. Metalloprotease. This chain is Zinc metalloproteinase nas-39, found in Caenorhabditis elegans.